The primary structure comprises 503 residues: Glycoprotein 3-alpha-L-fucosyltransferase A (503 aa).

Over 1–10 (MRRPKISLKK) the chain is Cytoplasmic. A helical; Signal-anchor for type II membrane protein membrane pass occupies residues 11 to 28 (YFYLTLICALLLIFGFSL). Topologically, residues 29 to 503 (KEREIWKTLS…KDVISDSSDD (475 aa)) are lumenal. Residues 44–71 (ITTQQQQHQHLHQLQSMDEEHPMATSST) form a disordered region. Residues 47-58 (QQQQHQHLHQLQ) show a composition bias toward low complexity. Residues Asn-262, Asn-295, and Asn-299 are each glycosylated (N-linked (GlcNAc...) asparagine).

Belongs to the glycosyltransferase 10 family. It depends on Mn(2+) as a cofactor.

It localises to the golgi apparatus. It is found in the golgi stack membrane. It carries out the reaction N(4)-{beta-D-GlcNAc-(1-&gt;2)-alpha-D-Man-(1-&gt;3)-[beta-D-GlcNAc-(1-&gt;2)-alpha-D-Man-(1-&gt;6)]-beta-D-Man-(1-&gt;4)-beta-D-GlcNAc-(1-&gt;4)-beta-D-GlcNAc}-L-asparaginyl-[protein] + GDP-beta-L-fucose = N(4)-{beta-D-GlcNAc-(1-&gt;2)-alpha-D-Man-(1-&gt;3)-[beta-D-GlcNAc-(1-&gt;2)-alpha-D-Man-(1-&gt;6)]-beta-D-Man-(1-&gt;4)-beta-D-GlcNAc-(1-&gt;4)-[alpha-L-Fuc(1-&gt;3)]-beta-D-GlcNAc}-L-asparaginyl-[protein] + GDP + H(+). It functions in the pathway protein modification; protein glycosylation. Functionally, catalyzes alpha-1,3 glycosidic linkages of N-glycans. Plays a role in neuronal development by promoting ventral nerve cord formation, possibly by promoting interactions between migrating cells and the extracellular matrix or by promoting neural activity. The protein is Glycoprotein 3-alpha-L-fucosyltransferase A (FucTA) of Drosophila melanogaster (Fruit fly).